Reading from the N-terminus, the 226-residue chain is Cobalt transport protein CbiM 1 (226 aa).

The next 6 helical transmembrane spans lie at 6–26 (GFLP…VVAY), 43–63 (MLLG…MPSV), 75–95 (LGAI…VLLF), 107–127 (TLGA…AAVF), 135–155 (FPFG…TYVT), and 181–201 (VFAL…VVVM).

This sequence belongs to the CbiM family. As to quaternary structure, forms an energy-coupling factor (ECF) transporter complex composed of an ATP-binding protein (A component, CbiO), a transmembrane protein (T component, CbiQ) and 2 possible substrate-capture proteins (S components, CbiM and CbiN) of unknown stoichimetry.

The protein resides in the cell inner membrane. It functions in the pathway cofactor biosynthesis; adenosylcobalamin biosynthesis. Its function is as follows. Part of the energy-coupling factor (ECF) transporter complex CbiMNOQ involved in cobalt import. The polypeptide is Cobalt transport protein CbiM 1 (cbim1) (Pelobacter propionicus (strain DSM 2379 / NBRC 103807 / OttBd1)).